The chain runs to 620 residues: Chaperone protein HscA homolog (620 aa).

This sequence belongs to the heat shock protein 70 family.

Its function is as follows. Chaperone involved in the maturation of iron-sulfur cluster-containing proteins. Has a low intrinsic ATPase activity which is markedly stimulated by HscB. The polypeptide is Chaperone protein HscA homolog (Pseudomonas syringae pv. syringae (strain B728a)).